The sequence spans 111 residues: Flagellar hook-basal body complex protein FliE (111 aa).

Belongs to the FliE family.

It localises to the bacterial flagellum basal body. This is Flagellar hook-basal body complex protein FliE from Brucella ovis (strain ATCC 25840 / 63/290 / NCTC 10512).